Consider the following 192-residue polypeptide: Xanthine phosphoribosyltransferase (192 aa).

Positions 20 and 27 each coordinate xanthine. Residue 128-132 (AQGEA) coordinates 5-phospho-alpha-D-ribose 1-diphosphate. K156 lines the xanthine pocket.

The protein belongs to the purine/pyrimidine phosphoribosyltransferase family. Xpt subfamily. In terms of assembly, homodimer.

Its subcellular location is the cytoplasm. The enzyme catalyses XMP + diphosphate = xanthine + 5-phospho-alpha-D-ribose 1-diphosphate. It functions in the pathway purine metabolism; XMP biosynthesis via salvage pathway; XMP from xanthine: step 1/1. Converts the preformed base xanthine, a product of nucleic acid breakdown, to xanthosine 5'-monophosphate (XMP), so it can be reused for RNA or DNA synthesis. The protein is Xanthine phosphoribosyltransferase of Lactobacillus helveticus (strain DPC 4571).